The sequence spans 377 residues: Phospho-N-acetylmuramoyl-pentapeptide-transferase (377 aa).

Transmembrane regions (helical) follow at residues 9 to 29 (YITL…LVAG), 62 to 82 (MGGA…ADWI), 85 to 105 (FVWV…MDDY), 122 to 142 (FFWQ…AVSA), 155 to 175 (WVGS…VPFF), 178 to 198 (VSYP…IVGT), 210 to 230 (GLAI…AYVV), 247 to 267 (AAEL…FLWF), 274 to 294 (VFMG…IAVI), 299 to 319 (IVLF…MVQV), and 354 to 374 (QVVV…LSTL).

Belongs to the glycosyltransferase 4 family. MraY subfamily. Mg(2+) is required as a cofactor.

It localises to the cell inner membrane. It carries out the reaction UDP-N-acetyl-alpha-D-muramoyl-L-alanyl-gamma-D-glutamyl-meso-2,6-diaminopimeloyl-D-alanyl-D-alanine + di-trans,octa-cis-undecaprenyl phosphate = di-trans,octa-cis-undecaprenyl diphospho-N-acetyl-alpha-D-muramoyl-L-alanyl-D-glutamyl-meso-2,6-diaminopimeloyl-D-alanyl-D-alanine + UMP. It participates in cell wall biogenesis; peptidoglycan biosynthesis. In terms of biological role, catalyzes the initial step of the lipid cycle reactions in the biosynthesis of the cell wall peptidoglycan: transfers peptidoglycan precursor phospho-MurNAc-pentapeptide from UDP-MurNAc-pentapeptide onto the lipid carrier undecaprenyl phosphate, yielding undecaprenyl-pyrophosphoryl-MurNAc-pentapeptide, known as lipid I. In Bordetella parapertussis (strain 12822 / ATCC BAA-587 / NCTC 13253), this protein is Phospho-N-acetylmuramoyl-pentapeptide-transferase.